Reading from the N-terminus, the 130-residue chain is MKVVYFSFTGNVRRFIARSGFENTLEITNDNCAEVRIDEPYILVTSTIGFGEVPDVVQTFLRHNGTMIRGVVGSGNRNWGQNFAKASDTISKDYMVPLLMKFEVQGTKKDVEEFKDKVGHFYEDNERKAI.

It belongs to the NrdI family.

In terms of biological role, probably involved in ribonucleotide reductase function. In Staphylococcus carnosus (strain TM300), this protein is Protein NrdI.